A 329-amino-acid chain; its full sequence is GTPase Obg (329 aa).

Residues 1–159 (MQFIDQARIT…WFLQLELKLL (159 aa)) enclose the Obg domain. The OBG-type G domain occupies 160–328 (AEVGIIGLPN…LLAQVWKELG (169 aa)). ATP contacts are provided by residues 166–173 (GLPNAGKS), 191–195 (FTTLV), 213–216 (DIPG), 280–283 (NKQE), and 309–311 (SAA). Mg(2+)-binding residues include Ser173 and Thr193.

This sequence belongs to the TRAFAC class OBG-HflX-like GTPase superfamily. OBG GTPase family. As to quaternary structure, monomer. Mg(2+) serves as cofactor.

Its subcellular location is the cytoplasm. An essential GTPase which binds GTP, GDP and possibly (p)ppGpp with moderate affinity, with high nucleotide exchange rates and a fairly low GTP hydrolysis rate. Plays a role in control of the cell cycle, stress response, ribosome biogenesis and in those bacteria that undergo differentiation, in morphogenesis control. This is GTPase Obg from Prochlorococcus marinus (strain MIT 9313).